A 308-amino-acid chain; its full sequence is N-acetylmuramic acid 6-phosphate etherase (308 aa).

The SIS domain maps to 62 to 225; that stretch reads TAARLRQGGR…STGVMVQLGK (164 aa). Catalysis depends on E90, which acts as the Proton donor. E121 is an active-site residue.

This sequence belongs to the GCKR-like family. MurNAc-6-P etherase subfamily. As to quaternary structure, homodimer.

It carries out the reaction N-acetyl-D-muramate 6-phosphate + H2O = N-acetyl-D-glucosamine 6-phosphate + (R)-lactate. Its pathway is amino-sugar metabolism; N-acetylmuramate degradation. Its function is as follows. Specifically catalyzes the cleavage of the D-lactyl ether substituent of MurNAc 6-phosphate, producing GlcNAc 6-phosphate and D-lactate. The protein is N-acetylmuramic acid 6-phosphate etherase of Thermosynechococcus vestitus (strain NIES-2133 / IAM M-273 / BP-1).